The following is a 474-amino-acid chain: tRNA-2-methylthio-N(6)-dimethylallyladenosine synthase (474 aa).

The 118-residue stretch at 3 to 120 (KKLHIKTWGC…LPDMIEQVRR (118 aa)) folds into the MTTase N-terminal domain. Residues Cys12, Cys49, Cys83, Cys157, Cys161, and Cys164 each contribute to the [4Fe-4S] cluster site. Residues 143–375 (RAEGPTAFVS…QDRITQQAMR (233 aa)) enclose the Radical SAM core domain. The TRAM domain occupies 378–441 (RHMMGTVQRI…TNSLRGKFIR (64 aa)).

This sequence belongs to the methylthiotransferase family. MiaB subfamily. As to quaternary structure, monomer. The cofactor is [4Fe-4S] cluster.

The protein localises to the cytoplasm. It carries out the reaction N(6)-dimethylallyladenosine(37) in tRNA + (sulfur carrier)-SH + AH2 + 2 S-adenosyl-L-methionine = 2-methylsulfanyl-N(6)-dimethylallyladenosine(37) in tRNA + (sulfur carrier)-H + 5'-deoxyadenosine + L-methionine + A + S-adenosyl-L-homocysteine + 2 H(+). Its function is as follows. Catalyzes the methylthiolation of N6-(dimethylallyl)adenosine (i(6)A), leading to the formation of 2-methylthio-N6-(dimethylallyl)adenosine (ms(2)i(6)A) at position 37 in tRNAs that read codons beginning with uridine. The sequence is that of tRNA-2-methylthio-N(6)-dimethylallyladenosine synthase from Shewanella putrefaciens (strain CN-32 / ATCC BAA-453).